A 679-amino-acid chain; its full sequence is Mitotic interactor and substrate of PLK1 (679 aa).

Position 78 is a phosphoserine; by CDK1; in vitro (serine 78). Disordered stretches follow at residues 151–182 and 206–245; these read AVRK…TPLE and ANKG…GHVV. Residues 153–163 show a composition bias toward polar residues; the sequence is RKSSTVATLQG. Residue serine 156 is modified to Phosphoserine. 2 positions are modified to phosphothreonine; by CDK1; in vitro: threonine 164 and threonine 172. Position 179 is a phosphothreonine (threonine 179). Serine 214 carries the phosphoserine; by CDK1; in vitro modification. Threonine 219 bears the Phosphothreonine mark. Threonine 224 bears the Phosphothreonine; by CDK1; in vitro mark. At serine 284 the chain carries Phosphoserine; by CDK1; in vitro. Threonine 287 carries the post-translational modification Phosphothreonine; by CDK1; in vitro. The residue at position 348 (serine 348) is a Phosphoserine. A compositionally biased stretch (basic and acidic residues) spans 360–371; that stretch reads QREEDHRREGLH. Positions 360–419 are disordered; the sequence is QREEDHRREGLHVGRASTPDWVSEGPQPGLRRALSSDSILSPAPDARAADPAPEVRKVNR. At threonine 377 the chain carries Phosphothreonine; by CDK1; in vitro. Serine 382 carries the post-translational modification Phosphoserine; by CDK1; in vitro. Serine 394, serine 395, and serine 397 each carry phosphoserine; by PLK1; in vitro. Residue serine 400 is modified to Phosphoserine. Residues 401–411 are compositionally biased toward low complexity; that stretch reads PAPDARAADPA. Serine 430 carries the phosphoserine modification. The segment at 447-494 is disordered; it reads PSSLSTAEAKAATSPKATMSPRHLSESSGKPLSTKQEASKPPRGCPQA. Serine 471 carries the post-translational modification Phosphoserine; by PLK1; in vitro. Residues 472 to 482 show a composition bias toward polar residues; the sequence is ESSGKPLSTKQ. Residues serine 541 and serine 543 each carry the phosphoserine modification. Residues 545–569 are a coiled coil; it reads DLLERERESVLRREQEVAEERRNAL. Over residues 557–567 the composition is skewed to basic and acidic residues; that stretch reads REQEVAEERRN. Disordered regions lie at residues 557–598 and 622–643; these read REQE…ITGS and DPVD…GINP. Phosphoserine; by CDK1; in vitro is present on serine 575. A Phosphothreonine modification is found at threonine 577. A phosphoserine; by PLK1; in vitro mark is found at serine 582 and serine 586. Low complexity predominate over residues 583 to 593; sequence DQNSRSSSQAS. Serine 675 is modified (phosphoserine).

This sequence belongs to the MISP family. As to quaternary structure, associates with F-actin. Interacts with DCTN1; this interaction regulates DCTN1 distribution at the cell cortex. Interacts with PTK2/FAK and MAPRE1. Post-translationally, phosphorylated by CDK1 and PLK1. CDK1 is the priming kinase for PLK1 phosphorylation. Phosphorylation by PLK1 is required for proper spindle orientation at metaphase.

Its subcellular location is the cell junction. It localises to the focal adhesion. It is found in the cytoplasm. The protein localises to the cytoskeleton. The protein resides in the cell cortex. In terms of biological role, plays a role in mitotic spindle orientation and mitotic progression. Regulates the distribution of dynactin at the cell cortex in a PLK1-dependent manner, thus stabilizing cortical and astral microtubule attachments required for proper mitotic spindle positioning. May link microtubules to the actin cytospkeleton and focal adhesions. May be required for directed cell migration and centrosome orientation. May also be necessary for proper stacking of the Golgi apparatus. This is Mitotic interactor and substrate of PLK1 from Homo sapiens (Human).